We begin with the raw amino-acid sequence, 95 residues long: Large ribosomal subunit protein uL23 (95 aa).

It belongs to the universal ribosomal protein uL23 family. As to quaternary structure, part of the 50S ribosomal subunit. Contacts protein L29, and trigger factor when it is bound to the ribosome.

Its function is as follows. One of the early assembly proteins it binds 23S rRNA. One of the proteins that surrounds the polypeptide exit tunnel on the outside of the ribosome. Forms the main docking site for trigger factor binding to the ribosome. This is Large ribosomal subunit protein uL23 from Fusobacterium nucleatum subsp. nucleatum (strain ATCC 25586 / DSM 15643 / BCRC 10681 / CIP 101130 / JCM 8532 / KCTC 2640 / LMG 13131 / VPI 4355).